The chain runs to 456 residues: MELSALTAVSPVDGRYGSKTIALRSIFSEFGLLKYRTIVEIRWLQKLAATAEIAEVPAFSAEANQFLDAIAANFNEADALRIKEIERTTNHDVKAVEYFLKEKVAAMPELHAVNEFIHFACTSEDINNTSHALMLKEARDTVILPEIRNVIDAIRKLAEEYRDIPLLSRTHGQPASPSTMGKEMANVAYRMERQYKQIANVEILAKINGAVGNYNAHLSAYPTVDWHKFSEEFITESLGVDWNPYTTQIEPHDYIAELFEAVARFNTILIDFDRDVWGYIALGHFKQRTIAGEIGSSTMPHKVNPIDFENSEGNLGLANAVFTHLAQKLPISRWQRDLTDSTVLRNLGVGVGYAIIAYTSTLKGISKLEVNRDALLAELDHNWEVLAEPIQTVMRRYGIEKPYEKLKELTRGKRVDGEAMRQFIDGLALPAEEKTRLKAMTPASYIGYAIELTDKL.

N(6)-(1,2-dicarboxyethyl)-AMP is bound by residues 15-16 (RY), 90-92 (NHD), and 122-123 (TS). The active-site Proton donor/acceptor is the His171. Position 248 (Gln248) interacts with N(6)-(1,2-dicarboxyethyl)-AMP. Ser296 serves as the catalytic Proton donor/acceptor. Residues Ser297, 302–304 (KVN), Asn310, Arg336, and 341–345 (STVLR) contribute to the N(6)-(1,2-dicarboxyethyl)-AMP site.

Belongs to the lyase 1 family. Adenylosuccinate lyase subfamily. As to quaternary structure, homotetramer.

The enzyme catalyses N(6)-(1,2-dicarboxyethyl)-AMP = fumarate + AMP. It carries out the reaction (2S)-2-[5-amino-1-(5-phospho-beta-D-ribosyl)imidazole-4-carboxamido]succinate = 5-amino-1-(5-phospho-beta-D-ribosyl)imidazole-4-carboxamide + fumarate. The catalysed reaction is (2S)-2-amino-2'-deoxyadenylo-succinate = dZMP + fumarate. It participates in purine metabolism; AMP biosynthesis via de novo pathway; AMP from IMP: step 2/2. Its pathway is purine metabolism; IMP biosynthesis via de novo pathway; 5-amino-1-(5-phospho-D-ribosyl)imidazole-4-carboxamide from 5-amino-1-(5-phospho-D-ribosyl)imidazole-4-carboxylate: step 2/2. It functions in the pathway purine metabolism. Catalyzes two reactions in de novo purine nucleotide biosynthesis. Catalyzes the breakdown of 5-aminoimidazole- (N-succinylocarboxamide) ribotide (SAICAR or 2-[5-amino-1-(5-phospho-beta-D-ribosyl)imidazole-4-carboxamido]succinate) to 5-aminoimidazole-4-carboxamide ribotide (AICAR or 5-amino-1-(5-phospho-beta-D-ribosyl)imidazole-4-carboxamide) and fumarate, and of adenylosuccinate (ADS or N(6)-(1,2-dicarboxyethyl)-AMP) to adenosine monophosphate (AMP) and fumarate. Its function is as follows. (Microbial infection) Catalyzes the conversion of 2-amino-2'-deoxyadenylo-succinate to dZMP and fumarate, when the bacterium is infected by a phage that produces the substrate of this reaction, a step in the synthesis of dZTP (2-amino-2'-deoxyadenosine 5'-triphosphate), which is a nucleotide then used by the phage as a DNA polymerase substrate. This Vibrio cholerae serotype O1 (strain ATCC 39541 / Classical Ogawa 395 / O395) protein is Adenylosuccinate lyase.